The sequence spans 92 residues: RQC P-site tRNA stabilizing factor (92 aa).

The S4 RNA-binding domain maps to 5-65 (MRLDKYLKVS…GPKIVTAKIE (61 aa)).

It belongs to the RqcP family. In terms of assembly, associates with stalled 50S ribosomal subunits. Binds to RqcH, 23S rRNA and the P-site tRNA. Does not require RqcH for association with 50S subunits.

Key component of the ribosome quality control system (RQC), a ribosome-associated complex that mediates the extraction of incompletely synthesized nascent chains from stalled ribosomes and their subsequent degradation. RqcH recruits Ala-charged tRNA, and with RqcP directs the elongation of stalled nascent chains on 50S ribosomal subunits, leading to non-templated C-terminal alanine extensions (Ala tail). The Ala tail promotes nascent chain degradation. RqcP is associated with the translocation-like movement of the peptidyl-tRNA from the A-site into the P-site. The protein is RQC P-site tRNA stabilizing factor of Listeria monocytogenes serovar 1/2a (strain ATCC BAA-679 / EGD-e).